The primary structure comprises 256 residues: Low molecular mass lipoprotein PBMHP-6 (256 aa).

The first 19 residues, 1–19 (MRLTLFAFVLAVCALASNA), serve as a signal peptide directing secretion.

Belongs to the 30 kDa lipoprotein family.

The protein resides in the secreted. The polypeptide is Low molecular mass lipoprotein PBMHP-6 (Bombyx mori (Silk moth)).